The primary structure comprises 299 residues: Nitrogenase iron protein (299 aa).

8-15 provides a ligand contact to ATP; that stretch reads GKGGIGKS. Cys96 is a [4Fe-4S] cluster binding site. At Arg99 the chain carries ADP-ribosylarginine; by dinitrogenase reductase ADP-ribosyltransferase. Residue Cys130 coordinates [4Fe-4S] cluster.

It belongs to the NifH/BchL/ChlL family. In terms of assembly, homodimer. [4Fe-4S] cluster serves as cofactor. In terms of processing, the reversible ADP-ribosylation of Arg-99 inactivates the nitrogenase reductase and regulates nitrogenase activity.

It carries out the reaction N2 + 8 reduced [2Fe-2S]-[ferredoxin] + 16 ATP + 16 H2O = H2 + 8 oxidized [2Fe-2S]-[ferredoxin] + 2 NH4(+) + 16 ADP + 16 phosphate + 6 H(+). Its function is as follows. The key enzymatic reactions in nitrogen fixation are catalyzed by the nitrogenase complex, which has 2 components: the iron protein and the molybdenum-iron protein. The protein is Nitrogenase iron protein of Gloeothece citriformis (strain PCC 7424) (Cyanothece sp. (strain PCC 7424)).